The following is a 264-amino-acid chain: S-adenosylmethionine decarboxylase proenzyme (264 aa).

S113 functions as the Schiff-base intermediate with substrate; via pyruvic acid in the catalytic mechanism. A Pyruvic acid (Ser); by autocatalysis modification is found at S113. Catalysis depends on H118, which acts as the Proton acceptor; for processing activity. Residue C141 is the Proton donor; for catalytic activity of the active site.

This sequence belongs to the prokaryotic AdoMetDC family. Type 2 subfamily. In terms of assembly, heterooctamer of four alpha and four beta chains arranged as a tetramer of alpha/beta heterodimers. Requires pyruvate as cofactor. In terms of processing, is synthesized initially as an inactive proenzyme. Formation of the active enzyme involves a self-maturation process in which the active site pyruvoyl group is generated from an internal serine residue via an autocatalytic post-translational modification. Two non-identical subunits are generated from the proenzyme in this reaction, and the pyruvate is formed at the N-terminus of the alpha chain, which is derived from the carboxyl end of the proenzyme. The post-translation cleavage follows an unusual pathway, termed non-hydrolytic serinolysis, in which the side chain hydroxyl group of the serine supplies its oxygen atom to form the C-terminus of the beta chain, while the remainder of the serine residue undergoes an oxidative deamination to produce ammonia and the pyruvoyl group blocking the N-terminus of the alpha chain.

It carries out the reaction S-adenosyl-L-methionine + H(+) = S-adenosyl 3-(methylsulfanyl)propylamine + CO2. It functions in the pathway amine and polyamine biosynthesis; S-adenosylmethioninamine biosynthesis; S-adenosylmethioninamine from S-adenosyl-L-methionine: step 1/1. In terms of biological role, catalyzes the decarboxylation of S-adenosylmethionine to S-adenosylmethioninamine (dcAdoMet), the propylamine donor required for the synthesis of the polyamines spermine and spermidine from the diamine putrescine. The sequence is that of S-adenosylmethionine decarboxylase proenzyme from Pseudomonas syringae pv. syringae (strain B728a).